The chain runs to 357 residues: Outer membrane protein YedS (357 aa).

The signal sequence occupies residues 1 to 21; sequence MKRKVLAMLVPALLVAGAANA.

The protein belongs to the Gram-negative porin family.

It is found in the cell outer membrane. In terms of biological role, forms pores that allow passive diffusion of small molecules across the outer membrane. Plays a role in resistance to carbapenems; this carbapenem-resistant, noncarbapenemase-producing clinical isolate has a deletion in ompF and a mutated marR gene that does not induce expression of this protein. However if this gene is overexpressed, or if wild-type marR is introduced, this leads to decreased resistance to the carbapenem antibiotics ertapenem, imipenem and meropenem. This Escherichia coli protein is Outer membrane protein YedS.